A 466-amino-acid chain; its full sequence is Ribulose bisphosphate carboxylase large chain (466 aa).

K4 bears the N6,N6,N6-trimethyllysine mark. Residues N113 and T163 each coordinate substrate. The active-site Proton acceptor is K165. Substrate is bound at residue K167. Positions 191, 193, and 194 each coordinate Mg(2+). K191 carries the N6-carboxylysine modification. H284 serves as the catalytic Proton acceptor. Substrate-binding residues include R285, H317, and S369.

The protein belongs to the RuBisCO large chain family. Type I subfamily. In terms of assembly, heterohexadecamer of 8 large chains and 8 small chains; disulfide-linked. The disulfide link is formed within the large subunit homodimers. Requires Mg(2+) as cofactor. The disulfide bond which can form in the large chain dimeric partners within the hexadecamer appears to be associated with oxidative stress and protein turnover.

Its subcellular location is the plastid. It localises to the chloroplast. The catalysed reaction is 2 (2R)-3-phosphoglycerate + 2 H(+) = D-ribulose 1,5-bisphosphate + CO2 + H2O. It carries out the reaction D-ribulose 1,5-bisphosphate + O2 = 2-phosphoglycolate + (2R)-3-phosphoglycerate + 2 H(+). Its function is as follows. RuBisCO catalyzes two reactions: the carboxylation of D-ribulose 1,5-bisphosphate, the primary event in carbon dioxide fixation, as well as the oxidative fragmentation of the pentose substrate in the photorespiration process. Both reactions occur simultaneously and in competition at the same active site. The chain is Ribulose bisphosphate carboxylase large chain from Proboscidea louisianica (Louisiana Devil's-claw).